The primary structure comprises 458 residues: 5-hydroxytryptamine receptor 2C (458 aa).

The N-terminal stretch at 1 to 32 is a signal peptide; the sequence is MVNLRKAVHSFLVHLIGLLVWQCDISVSPVAA. Over 33–55 the chain is Extracellular; it reads LVTDIFNTSDGGRFKFPDGVQNW. Residues 56 to 80 traverse the membrane as a helical segment; it reads PALSIVIIIILTIGGNILVIMAVSL. Topologically, residues 81-86 are cytoplasmic; the sequence is EKKLHN. Residues 87-111 traverse the membrane as a helical segment; the sequence is ATNYFLMSLAIADMLVGLLVMPLSL. The Extracellular segment spans residues 112 to 128; that stretch reads LAILYDYVWPLPRYLCP. C127 and C207 are oxidised to a cystine. The helical transmembrane segment at 129–151 threads the bilayer; it reads VWISLDVLFSTASIMHLCAISLD. Ergotamine is bound at residue T139. The DRY motif; important for ligand-induced conformation changes signature appears at 151–153; that stretch reads DRY. The Cytoplasmic portion of the chain corresponds to 152–167; it reads RYVAIRNPVEHSRFNS. Residues 168–189 form a helical membrane-spanning segment; that stretch reads RTKAIMKIAIVWAISIGVSVPI. Residues 190–213 are Extracellular-facing; that stretch reads PVIGLRDEEKVFVNNTTCVLNDPN. 2 N-linked (GlcNAc...) asparagine glycosylation sites follow: N203 and N204. L209 is an ergotamine binding site. The helical transmembrane segment at 214-236 threads the bilayer; it reads FVLIGSFVAFFIPLTIMVITYCL. Over 237–311 the chain is Cytoplasmic; it reads TIHVLRRQAL…AINNERKASK (75 aa). The segment at 272–301 is disordered; sequence TEEENSANPNQDSNPRRRKKKERRPRGTMQ. Residues 287 to 297 show a composition bias toward basic residues; that stretch reads RRRKKKERRPR. Residues 312–336 form a helical membrane-spanning segment; it reads VLGIVFFVFLVMWCPFFITNILSVL. C337 and C341 are disulfide-bonded. The Extracellular portion of the chain corresponds to 337 to 347; that stretch reads CGKACNQKLME. A helical membrane pass occupies residues 348-370; it reads KLLNVFVWIGYVCSGINPLVYTL. The NPxxY motif; important for ligand-induced conformation changes and signaling signature appears at 364-368; that stretch reads NPLVY. Topologically, residues 371–458 are cytoplasmic; it reads FNKIYRRAFS…SVVSERISSV (88 aa). Residues 456–458 carry the PDZ-binding motif; it reads SSV.

It belongs to the G-protein coupled receptor 1 family. As to quaternary structure, interacts with MPDZ. Interacts with ARRB2. Interacts with MPP3; this interaction stabilizes the receptor at the plasma membrane and prevents the desensitization of the HTR2C receptor-mediated calcium response.

It is found in the cell membrane. G-protein coupled receptor for 5-hydroxytryptamine (serotonin). Also functions as a receptor for various drugs and psychoactive substances, including ergot alkaloid derivatives, 1-2,5,-dimethoxy-4-iodophenyl-2-aminopropane (DOI) and lysergic acid diethylamide (LSD). Ligand binding causes a conformation change that triggers signaling via guanine nucleotide-binding proteins (G proteins) and modulates the activity of downstream effectors. HTR2C is coupled to G(q)/G(11) G alpha proteins and activates phospholipase C-beta, releasing diacylglycerol (DAG) and inositol 1,4,5-trisphosphate (IP3) second messengers that modulate the activity of phosphatidylinositol 3-kinase and promote the release of Ca(2+) ions from intracellular stores, respectively. Beta-arrestin family members inhibit signaling via G proteins and mediate activation of alternative signaling pathways. Regulates neuronal activity via the activation of short transient receptor potential calcium channels in the brain, and thereby modulates the activation of pro-opiomelanocortin neurons and the release of CRH that then regulates the release of corticosterone. Plays a role in the regulation of appetite and eating behavior, responses to anxiogenic stimuli and stress. Plays a role in insulin sensitivity and glucose homeostasis. This is 5-hydroxytryptamine receptor 2C from Canis lupus familiaris (Dog).